The following is a 1172-amino-acid chain: Ras guanine nucleotide exchange factor W (1172 aa).

2 stretches are compositionally biased toward low complexity: residues 34 to 70 (PIYT…LNNL) and 78 to 87 (NSNSVNNTIS). Disordered regions lie at residues 34–100 (PIYT…RSNT), 138–162 (KFLD…RIQQ), and 186–246 (FKRS…EIKD). The span at 194 to 241 (QPPQSQSQQQQQLQLQQQQQQSMPNLSLGNNINSNNNNNNGSENNDIS) shows a compositional bias: low complexity. Helical transmembrane passes span 286 to 306 (IWLT…DIIG), 320 to 340 (IMAV…LNLF), 347 to 367 (FPGT…VTDI), 378 to 400 (VLSI…ISLI), 432 to 452 (LTTN…QLLV), and 545 to 565 (ILHL…NLLI). Residues 666 to 702 (LLGMLNEIDDSLQAAKEKVEEESIQNSILKKDIEDLY) are a coiled coil. Positions 765–903 (DLNVIQYATI…YIDSIHKRKM (139 aa)) constitute an N-terminal Ras-GEF domain. One can recognise a Ras-GEF domain in the interval 938–1170 (DISDIAIQIT…WKMSLSCEQR (233 aa)).

The protein resides in the membrane. Its function is as follows. Promotes the exchange of Ras-bound GDP by GTP. The protein is Ras guanine nucleotide exchange factor W (gefW) of Dictyostelium discoideum (Social amoeba).